The chain runs to 258 residues: Malonyl-[acyl-carrier protein] O-methyltransferase (258 aa).

It belongs to the methyltransferase superfamily.

It catalyses the reaction malonyl-[ACP] + S-adenosyl-L-methionine = malonyl-[ACP] methyl ester + S-adenosyl-L-homocysteine. The protein operates within cofactor biosynthesis; biotin biosynthesis. Converts the free carboxyl group of a malonyl-thioester to its methyl ester by transfer of a methyl group from S-adenosyl-L-methionine (SAM). It allows to synthesize pimeloyl-ACP via the fatty acid synthetic pathway. In Haemophilus ducreyi (strain 35000HP / ATCC 700724), this protein is Malonyl-[acyl-carrier protein] O-methyltransferase.